Here is a 464-residue protein sequence, read N- to C-terminus: Adenylyltransferase and sulfurtransferase MOCS3 (464 aa).

ATP contacts are provided by residues G101, D122, 129 to 133 (NNMHR), K146, and 190 to 191 (DN). Positions 231 and 234 each coordinate Zn(2+). Catalysis depends on C248, which acts as the Glycyl thioester intermediate; for adenylyltransferase activity. The Zn(2+) site is built by C306 and C309. A Rhodanese domain is found at 358 to 462 (KKEQHVLLDV…WAANVNPNFP (105 aa)). Catalysis depends on C422, which acts as the Cysteine persulfide intermediate; for sulfurtransferase activity.

In the N-terminal section; belongs to the HesA/MoeB/ThiF family. UBA4 subfamily. Requires Zn(2+) as cofactor.

It localises to the cytoplasm. It catalyses the reaction [molybdopterin-synthase sulfur-carrier protein]-C-terminal Gly-Gly + ATP + H(+) = [molybdopterin-synthase sulfur-carrier protein]-C-terminal Gly-Gly-AMP + diphosphate. The enzyme catalyses [molybdopterin-synthase sulfur-carrier protein]-C-terminal Gly-Gly-AMP + S-sulfanyl-L-cysteinyl-[cysteine desulfurase] + AH2 = [molybdopterin-synthase sulfur-carrier protein]-C-terminal-Gly-aminoethanethioate + L-cysteinyl-[cysteine desulfurase] + A + AMP + 2 H(+). The protein operates within tRNA modification; 5-methoxycarbonylmethyl-2-thiouridine-tRNA biosynthesis. Its pathway is cofactor biosynthesis; molybdopterin biosynthesis. In terms of biological role, plays a central role in 2-thiolation of mcm(5)S(2)U at tRNA wobble positions of cytosolic tRNA(Lys), tRNA(Glu) and tRNA(Gln). Also essential during biosynthesis of the molybdenum cofactor. Acts by mediating the C-terminal thiocarboxylation of sulfur carriers URM1 and MOCS2A. Its N-terminus first activates URM1 and MOCS2A as acyl-adenylates (-COAMP), then the persulfide sulfur on the catalytic cysteine is transferred to URM1 and MOCS2A to form thiocarboxylation (-COSH) of their C-terminus. The reaction probably involves hydrogen sulfide that is generated from the persulfide intermediate and that acts as a nucleophile towards URM1 and MOCS2A. Subsequently, a transient disulfide bond is formed. Does not use thiosulfate as sulfur donor; NFS1 probably acting as a sulfur donor for thiocarboxylation reactions. The sequence is that of Adenylyltransferase and sulfurtransferase MOCS3 from Arabidopsis thaliana (Mouse-ear cress).